A 538-amino-acid chain; its full sequence is Phosphoenolpyruvate carboxykinase (ATP) (538 aa).

3 residues coordinate substrate: Arg64, Tyr205, and Lys211. ATP is bound by residues Lys211, His230, and 246–254 (GLSGTGKTT). Mn(2+)-binding residues include Lys211 and His230. Asp267 contacts Mn(2+). ATP contacts are provided by residues Glu295, Arg331, 447–448 (RI), and Thr453. Arg331 is a binding site for substrate.

It belongs to the phosphoenolpyruvate carboxykinase (ATP) family. In terms of assembly, monomer. Mn(2+) is required as a cofactor.

It is found in the cytoplasm. The catalysed reaction is oxaloacetate + ATP = phosphoenolpyruvate + ADP + CO2. It participates in carbohydrate biosynthesis; gluconeogenesis. Functionally, involved in the gluconeogenesis. Catalyzes the conversion of oxaloacetate (OAA) to phosphoenolpyruvate (PEP) through direct phosphoryl transfer between the nucleoside triphosphate and OAA. In Haemophilus influenzae (strain 86-028NP), this protein is Phosphoenolpyruvate carboxykinase (ATP).